A 151-amino-acid polypeptide reads, in one-letter code: MLP-like protein 328 (151 aa).

The protein belongs to the MLP family.

This Arabidopsis thaliana (Mouse-ear cress) protein is MLP-like protein 328 (MLP328).